A 246-amino-acid polypeptide reads, in one-letter code: MKALIIDDEPLARNELTYLLNEIGGFEEINEAENVKETLEALLINQYDIIFLDVNLMDENGIELGAKIQKMKEPPAIIFATAHDQYAVQAFELNATDYILKPFGQKRIEQAVNKVRATKAKDDNSASAIANDMSANFDQSLPVEIDDKIHMLKQQNIIGIGTHNGITTIHTTNHKYETTEPLNRYEKRLNPAYFIRIHRSYIINTKHIKEVQQWFNYTYMVILTNGVKMQVGRSFMKDFKASIGLL.

The Response regulatory domain maps to 2–116; that stretch reads KALIIDDEPL…RIEQAVNKVR (115 aa). Aspartate 53 is subject to 4-aspartylphosphate. Positions 141 to 245 constitute an HTH LytTR-type domain; sequence LPVEIDDKIH…MKDFKASIGL (105 aa).

In terms of assembly, homodimer; when phosphorylated. In terms of processing, phosphorylated and dephosphorylated by LytS.

Its subcellular location is the cytoplasm. Its function is as follows. Member of the two-component regulatory system LytR/LytS that regulates genes involved in autolysis, programmed cell death, biofilm formation and cell wall metabolism. Also participates in sensing and responding to host defense cationic antimicrobial peptides (HDPs). Upon phosphorylation by LytS, functions as a transcription regulator by direct binding to promoter regions of target genes including lrgA and lrgB, to positively regulate their expression. This chain is Transcriptional regulatory protein LytR (lytR), found in Staphylococcus aureus (strain MW2).